Consider the following 132-residue polypeptide: Small ribosomal subunit protein uS11 (132 aa).

Positions 108–132 (GRIEDVTPVPHDSCRPKGGRRGRRV) are disordered.

This sequence belongs to the universal ribosomal protein uS11 family. As to quaternary structure, part of the 30S ribosomal subunit.

In terms of biological role, located on the platform of the 30S subunit. The protein is Small ribosomal subunit protein uS11 of Methanoregula boonei (strain DSM 21154 / JCM 14090 / 6A8).